A 283-amino-acid polypeptide reads, in one-letter code: 2-dehydro-3-deoxyphosphooctonate aldolase (283 aa).

Belongs to the KdsA family.

The protein resides in the cytoplasm. The catalysed reaction is D-arabinose 5-phosphate + phosphoenolpyruvate + H2O = 3-deoxy-alpha-D-manno-2-octulosonate-8-phosphate + phosphate. Its pathway is carbohydrate biosynthesis; 3-deoxy-D-manno-octulosonate biosynthesis; 3-deoxy-D-manno-octulosonate from D-ribulose 5-phosphate: step 2/3. It participates in bacterial outer membrane biogenesis; lipopolysaccharide biosynthesis. This Vibrio cholerae serotype O1 (strain ATCC 39315 / El Tor Inaba N16961) protein is 2-dehydro-3-deoxyphosphooctonate aldolase.